Reading from the N-terminus, the 211-residue chain is Redox-sensing transcriptional repressor Rex (211 aa).

The segment at residues 17-56 is a DNA-binding region (H-T-H motif); it reads KYHRYLEELMKNEVDRISSKELGEKIGFTASQIRQDLNCF. 91 to 96 contacts NAD(+); it reads GAGNIG.

This sequence belongs to the transcriptional regulatory Rex family. Homodimer.

Its subcellular location is the cytoplasm. Functionally, modulates transcription in response to changes in cellular NADH/NAD(+) redox state. The chain is Redox-sensing transcriptional repressor Rex from Clostridium beijerinckii (strain ATCC 51743 / NCIMB 8052) (Clostridium acetobutylicum).